A 1838-amino-acid chain; its full sequence is Collagen alpha-1(V) chain (1838 aa).

Positions 1–37 (MDVHTRWKARSALRPGAPLLPPLLLLLLWAPPPSRAA) are cleaved as a signal peptide. The Laminin G-like domain occupies 72–244 (DVAYRVTKDA…DYCEHYSPDC (173 aa)). A nonhelical region region spans residues 231-443 (RAAYDYCEHY…MPANQDTIYE (213 aa)). Y234, Y236, Y240, Y262, and Y263 each carry sulfotyrosine. 5 disordered regions span residues 242–269 (PDCD…GDGE), 281–457 (EDPE…QKGE), 470–520 (PPGP…GTML), 526–545 (FGGG…QESQ), and 559–1574 (GPAG…EVIQ). Acidic residues predominate over residues 258 to 269 (NPDEYYTEGDGE). Positions 285–304 (DLGKEPTPSKKPVEAAKETT) are enriched in basic and acidic residues. Low complexity predominate over residues 309–323 (ELTPTPTEAAPMPET). Residues Y338, Y340, Y346, and Y347 each carry the sulfotyrosine modification. Over residues 377 to 388 (PTSTADTSNSSN) the composition is skewed to polar residues. Residues 396-406 (GADDLEGEFTE) show a composition bias toward acidic residues. A sulfotyrosine mark is found at Y416, Y417, Y420, and Y421. Over residues 417–428 (YDPYYDPTSSPS) the composition is skewed to low complexity. The interval 444–558 (GIGGPRGEKG…ILQQARLALR (115 aa)) is interrupted collagenous region. Pro residues predominate over residues 470–485 (PPGPEGPAGLPGPPGT). Positions 506-520 (LPGADGLPGPPGTML) are enriched in low complexity. The triple-helical region stretch occupies residues 559–1570 (GPAGPMGLTG…GPPGPPGPPG (1012 aa)). Hydroxyproline occurs at positions 570 and 576. Low complexity predominate over residues 587–597 (DVGPQGPRGVQ). P621 carries the hydroxyproline modification. A 5-hydroxylysine modification is found at K627. A Hydroxyproline modification is found at P639. K642 is modified (5-hydroxylysine). P648, P654, P657, P675, and P678 each carry hydroxyproline. Residues 671–686 (PRGLPGEPGPRGLLGP) are compositionally biased toward low complexity. K687 carries the 5-hydroxylysine modification. A compositionally biased stretch (pro residues) spans 687–696 (KGPPGPPGPP). P690, P696, and P705 each carry hydroxyproline. Position 708 is a 5-hydroxylysine (K708). Hydroxyproline occurs at positions 717, 720, 726, and 732. The span at 722–741 (QQGNPGAQGLPGPQGAIGPP) shows a compositional bias: low complexity. A 5-hydroxylysine modification is found at K744. The segment covering 747-756 (LGKPGLPGMP) has biased composition (low complexity). P750, P756, P762, P765, and P771 each carry hydroxyproline. A 5-hydroxylysine modification is found at K774. 2 positions are modified to hydroxyproline: P780 and P789. 5-hydroxylysine occurs at positions 795, 804, 807, and 810. Residue P816 is modified to Hydroxyproline. K819 is subject to 5-hydroxylysine. The residue at position 834 (P834) is a Hydroxyproline. Positions 837–846 (RGEDGPEGPK) are enriched in basic and acidic residues. Residue K846 is modified to 5-hydroxylysine. Residue P861 is modified to Hydroxyproline. K864 is subject to 5-hydroxylysine. Residues 867–876 (LGVPGLPGYP) are compositionally biased toward low complexity. Hydroxyproline occurs at positions 870, 873, and 876. At K882 the chain carries 5-hydroxylysine. A hydroxyproline mark is found at P888 and P891. Residue K897 is modified to 5-hydroxylysine. Hydroxyproline is present on residues P903 and P906. Residues 908–917 (PRGQRGPTGP) show a composition bias toward low complexity. A hydroxyproline mark is found at P930 and P945. Low complexity-rich tracts occupy residues 971–990 (KDGL…QGKT) and 999–1011 (VGPQ…TGPM). 4 positions are modified to hydroxyproline: P1017, P1020, P1023, and P1029. The span at 1088–1104 (SPGERGPAGAAGPIGIP) shows a compositional bias: low complexity. Residues 1106–1115 (RPGPQGPPGP) show a composition bias toward pro residues. Over residues 1116-1140 (AGEKGAPGEKGPQGPAGRDGLQGPV) the composition is skewed to low complexity. 2 positions are modified to hydroxyproline: P1221 and P1224. A compositionally biased stretch (low complexity) spans 1259–1268 (PSGAPGADGP). Pro residues-rich tracts occupy residues 1380-1398 (TGEP…PGPA) and 1454-1469 (SPGP…PPGL). P1467 and P1470 each carry hydroxyproline. Low complexity predominate over residues 1485-1494 (PGLIGLIGPP). The segment covering 1526 to 1541 (PIGPPGPPGLPGPPGP) has biased composition (pro residues). Positions 1542-1554 (KGAKGSSGPTGPK) are enriched in low complexity. Over residues 1560 to 1569 (PGPPGPPGPP) the composition is skewed to pro residues. Positions 1571–1605 (EVIQPLPIQASRTRRNIDASQLLDDGNGENYVDYA) are nonhelical region. Sulfotyrosine is present on residues Y1601 and Y1604. Residues 1606–1838 (DGMEEIFGSL…FEVGPACFMG (233 aa)) constitute a propeptide, C-terminal propeptide. A Fibrillar collagen NC1 domain is found at 1609 to 1837 (EEIFGSLNSL…GFEVGPACFM (229 aa)). Disulfide bonds link C1639/C1671, C1680/C1835, and C1746/C1789. Residues D1657, N1659, Q1660, C1662, and D1665 each coordinate Ca(2+).

The protein belongs to the fibrillar collagen family. In terms of assembly, trimers of two alpha 1(V) and one alpha 2(V) chains in most tissues and trimers of one alpha 1(V), one alpha 2(V), and one alpha 3(V) chains in placenta. Interacts with CSPG4. Prolines at the third position of the tripeptide repeating unit (G-X-Y) are hydroxylated in some or all of the chains. Post-translationally, sulfated on 40% of tyrosines.

The protein localises to the secreted. It localises to the extracellular space. The protein resides in the extracellular matrix. Type V collagen is a member of group I collagen (fibrillar forming collagen). It is a minor connective tissue component of nearly ubiquitous distribution. Type V collagen binds to DNA, heparan sulfate, thrombospondin, heparin, and insulin. This is Collagen alpha-1(V) chain (COL5A1) from Homo sapiens (Human).